We begin with the raw amino-acid sequence, 342 residues long: Nucleoid-associated protein Sfri_2491 (342 aa).

The protein belongs to the YejK family.

The protein localises to the cytoplasm. Its subcellular location is the nucleoid. In Shewanella frigidimarina (strain NCIMB 400), this protein is Nucleoid-associated protein Sfri_2491.